Consider the following 369-residue polypeptide: Biglycan (369 aa).

The N-terminal stretch at 1 to 16 is a signal peptide; it reads MWPLWPLAALLALSQA. The propeptide occupies 17 to 37; sequence LPFEQKAFWDFTLDDGLPMLN. 2 O-linked (Xyl...) (glycosaminoglycan) serine glycosylation sites follow: serine 42 and serine 48. Disulfide bonds link cysteine 64–cysteine 70 and cysteine 68–cysteine 77. LRR repeat units follow at residues 83–103, 104–127, 128–151, 152–172, 173–196, 197–221, 222–242, 243–266, 267–290, 291–313, 314–343, and 344–369; these read KAVP…NNDI, SELR…NNKI, SKIH…KNHL, VEIP…DNRI, RKVP…GNPL, ENSG…EAKL, TGIP…HNKI, QAIE…HNQI, RMIE…NNKL, SRVP…TNNI, TKVG…NNPV, and PYWE…NYKK. Serine 181 and serine 199 each carry an O-linked (Xyl...) (glycosaminoglycan) serine glycan. N-linked (GlcNAc...) asparagine glycans are attached at residues asparagine 271 and asparagine 312. A disulfide bond links cysteine 322 and cysteine 355.

This sequence belongs to the small leucine-rich proteoglycan (SLRP) family. SLRP class I subfamily. As to quaternary structure, homodimer. Forms a ternary complex with MFAP2 and ELN. In terms of processing, the two attached glycosaminoglycan chains can be either chondroitin sulfate or dermatan sulfate. As to expression, found in several connective tissues, especially in articular cartilages.

It localises to the secreted. The protein localises to the extracellular space. Its subcellular location is the extracellular matrix. Functionally, may be involved in collagen fiber assembly. This Bos taurus (Bovine) protein is Biglycan (BGN).